A 407-amino-acid polypeptide reads, in one-letter code: MKRVFLIVLDSFGIGSSPDADKFNDVGSNTFGHIVEKCFLGEANVGRKGVLCIPNLVKLGIINAAKESTGQYPLGFNYSSNVIASYGFASEISSGKDTTSGHWEIAGVPVLDDWYYFKEKQNSFPESLLEKIIRRSELTGFIGNCHASGTDIISRLGEEHIQTKKPIVYTSSDSVFQIACHEEFFGLSNLYKLCKTVRFILDQYNYKVARVIARPFIGNDKLQFQRTGNRRDFSIKPFATTVIKKLIDEKQGQVIAIGKVSDIYGGIGISKNIKSTGLYELCSTTIHEMKKALNNTIVFTNLVDFDSNWGHRRDVSGYAKGLELFDSRLSEIISLVQKNDLLILTADHGCDPTWIGTDHTRENVPVLIYSPGIKKNFLGHRKTFADIGQTIAKYFLLTDMSYGQNML.

Positions 10, 306, 311, 347, 348, and 359 each coordinate Mn(2+).

This sequence belongs to the phosphopentomutase family. Mn(2+) serves as cofactor.

The protein localises to the cytoplasm. It catalyses the reaction 2-deoxy-alpha-D-ribose 1-phosphate = 2-deoxy-D-ribose 5-phosphate. It carries out the reaction alpha-D-ribose 1-phosphate = D-ribose 5-phosphate. The protein operates within carbohydrate degradation; 2-deoxy-D-ribose 1-phosphate degradation; D-glyceraldehyde 3-phosphate and acetaldehyde from 2-deoxy-alpha-D-ribose 1-phosphate: step 1/2. Functionally, isomerase that catalyzes the conversion of deoxy-ribose 1-phosphate (dRib-1-P) and ribose 1-phosphate (Rib-1-P) to deoxy-ribose 5-phosphate (dRib-5-P) and ribose 5-phosphate (Rib-5-P), respectively. This is Phosphopentomutase from Buchnera aphidicola subsp. Acyrthosiphon pisum (strain 5A).